The chain runs to 127 residues: Protein ApaG (127 aa).

The 125-residue stretch at 3–127 (DDPRYRVEVE…FVLSVPRTLH (125 aa)) folds into the ApaG domain.

This Xanthomonas euvesicatoria pv. vesicatoria (strain 85-10) (Xanthomonas campestris pv. vesicatoria) protein is Protein ApaG.